We begin with the raw amino-acid sequence, 208 residues long: GTP-binding protein YPTM1 (208 aa).

GTP-binding positions include 15–23 (GDSSVGKSC), 33–40 (YVDSYIST), 63–67 (DTAGQ), 121–124 (NKCD), and 151–153 (SAK). The Effector region motif lies at 37–45 (YISTIGVDF). The interval 189–208 (QMKGRPIQQEQQKSSRCCST) is disordered. Over residues 196–208 (QQEQQKSSRCCST) the composition is skewed to polar residues. 2 S-geranylgeranyl cysteine lipidation sites follow: C205 and C206.

The protein belongs to the small GTPase superfamily. Rab family. As to expression, low levels in coleoptiles.

The protein resides in the cell membrane. Functionally, protein transport. Probably involved in vesicular traffic. The chain is GTP-binding protein YPTM1 (YPTM1) from Zea mays (Maize).